Reading from the N-terminus, the 302-residue chain is Aurora/IPL1-related protein kinase 2 (302 aa).

The span at 1–17 (MENKPQILQTKSKNTPN) shows a compositional bias: polar residues. Residues 1–23 (MENKPQILQTKSKNTPNKGGKLS) form a disordered region. In terms of domain architecture, Protein kinase spans 27-277 (FEIGRPLGKG…LQEVKDHYWV (251 aa)). ATP-binding positions include 33-41 (LGKGKFGSV) and K56. Residue D150 is the Proton acceptor of the active site.

Belongs to the protein kinase superfamily. Ser/Thr protein kinase family. As to quaternary structure, interacts with zen-4 and icp-1. Part of a complex containing at least air-2; icp-1; csc-1 and bir-1. Interacts with tlk-1 and bmk-1.

The protein resides in the cytoplasm. Its subcellular location is the cytoskeleton. The protein localises to the chromosome. It is found in the midbody. The enzyme catalyses L-seryl-[protein] + ATP = O-phospho-L-seryl-[protein] + ADP + H(+). The catalysed reaction is L-threonyl-[protein] + ATP = O-phospho-L-threonyl-[protein] + ADP + H(+). Its function is as follows. Serine/threonine-protein kinase which mediates both meiotic and mitotic chromosome segregation. Required for histone H3 'Ser-10' phosphorylation. Phosphorylates tlk-1 and zen-4. This Caenorhabditis briggsae protein is Aurora/IPL1-related protein kinase 2 (air-2).